A 542-amino-acid polypeptide reads, in one-letter code: Chaperonin GroEL 3 (542 aa).

ATP contacts are provided by residues 30 to 33, lysine 51, 87 to 91, glycine 415, and aspartate 496; these read TLGP and DGTTT.

The protein belongs to the chaperonin (HSP60) family. Forms a cylinder of 14 subunits composed of two heptameric rings stacked back-to-back. Interacts with the co-chaperonin GroES.

The protein resides in the cytoplasm. It carries out the reaction ATP + H2O + a folded polypeptide = ADP + phosphate + an unfolded polypeptide.. In terms of biological role, together with its co-chaperonin GroES, plays an essential role in assisting protein folding. The GroEL-GroES system forms a nano-cage that allows encapsulation of the non-native substrate proteins and provides a physical environment optimized to promote and accelerate protein folding. The protein is Chaperonin GroEL 3 of Sinorhizobium medicae (strain WSM419) (Ensifer medicae).